A 413-amino-acid chain; its full sequence is 2,3-bisphosphoglycerate-independent phosphoglycerate mutase (413 aa).

Belongs to the BPG-independent phosphoglycerate mutase family. A-PGAM subfamily.

It carries out the reaction (2R)-2-phosphoglycerate = (2R)-3-phosphoglycerate. It functions in the pathway carbohydrate degradation; glycolysis; pyruvate from D-glyceraldehyde 3-phosphate: step 3/5. Functionally, catalyzes the interconversion of 2-phosphoglycerate and 3-phosphoglycerate. The chain is 2,3-bisphosphoglycerate-independent phosphoglycerate mutase from Metallosphaera sedula (strain ATCC 51363 / DSM 5348 / JCM 9185 / NBRC 15509 / TH2).